A 241-amino-acid polypeptide reads, in one-letter code: Small ribosomal subunit protein uS2 (241 aa).

It belongs to the universal ribosomal protein uS2 family.

This chain is Small ribosomal subunit protein uS2, found in Pectobacterium atrosepticum (strain SCRI 1043 / ATCC BAA-672) (Erwinia carotovora subsp. atroseptica).